We begin with the raw amino-acid sequence, 566 residues long: 15-cis-phytoene desaturase, chloroplastic/chromoplastic (566 aa).

Residues 1–86 constitute a chloroplast and chromoplast transit peptide; the sequence is MVVFGNVSAA…ASLSASFRSA (86 aa). FAD contacts are provided by residues Ala-103, 122–123, Lys-130, 147–148, and Tyr-153; these read EA and HI. Arg-288 is a substrate binding site. The FAD site is built by Ile-330 and Asp-519. Residue Ala-527 participates in substrate binding. Met-529 contacts FAD.

It belongs to the carotenoid/retinoid oxidoreductase family. Homotetramer. FAD is required as a cofactor.

It localises to the plastid. The protein resides in the chloroplast. The protein localises to the chromoplast. It is found in the membrane. The catalysed reaction is 2 a plastoquinone + 15-cis-phytoene = 9,9',15-tri-cis-zeta-carotene + 2 a plastoquinol. It participates in carotenoid biosynthesis; lycopene biosynthesis. Converts phytoene into zeta-carotene via the intermediary of phytofluene by the symmetrical introduction of two double bonds at the C-11 and C-11' positions of phytoene with a concomitant isomerization of two neighboring double bonds at the C9 and C9' positions from trans to cis. This Arabidopsis thaliana (Mouse-ear cress) protein is 15-cis-phytoene desaturase, chloroplastic/chromoplastic (PDS).